The following is a 214-amino-acid chain: Dimethylamine corrinoid protein 2 (214 aa).

A B12-binding N-terminal domain is found at 1 to 91; sequence MATKEELIQE…DMPAGAATKK (91 aa). Residues 92-214 form the B12-binding domain; that stretch reads LGVIVNGTVE…AVAKAKELLL (123 aa). Histidine 105 serves as a coordination point for methylcob(III)alamin.

The protein belongs to the methylamine corrinoid protein family.

It participates in one-carbon metabolism; methanogenesis from dimethylamine. Its function is as follows. Acts as a methyl group carrier between MtbB and MtbA. This Methanosarcina mazei (strain ATCC BAA-159 / DSM 3647 / Goe1 / Go1 / JCM 11833 / OCM 88) (Methanosarcina frisia) protein is Dimethylamine corrinoid protein 2 (mtbC2).